The following is a 555-amino-acid chain: Genome polyprotein (555 aa).

Topologically, residues 1–7 (KHAQRIE) are extracellular. The chain crosses the membrane as a helical span at residues 8-28 (TWILRHPGFTIMAAILAYTIG). Residues 29 to 34 (TTHFQR) lie on the Cytoplasmic side of the membrane. Residues 35–49 (ALIFILLTAVAPSMT) form a helical membrane-spanning segment. At 50 to 494 (MRCIGISNRD…LHQVFGAIYG (445 aa)) the chain is on the extracellular side. Intrachain disulfides connect Cys-52-Cys-79, Cys-109-Cys-170, Cys-123-Cys-154, and Cys-141-Cys-165. Asn-116 carries N-linked (GlcNAc...) asparagine; by host glycosylation. The tract at residues 147–160 (DRGWGNGCGLFGKG) is fusion peptide. A glycan (N-linked (GlcNAc...) asparagine; by host) is linked at Asn-202. Cystine bridges form between Cys-234/Cys-334 and Cys-351/Cys-382. Residues 495–515 (AAFSGVSWTMKILIGVIITWI) form a helical membrane-spanning segment. Residues 516–521 (GMNSRS) lie on the Cytoplasmic side of the membrane. A helical transmembrane segment spans residues 522–542 (TSLSVSLVLVGIVTLYLEVMV). Residues 543 to 555 (QADSGCVVSWKNK) are Extracellular-facing.

Homodimer; in the endoplasmic reticulum and Golgi. Interacts with protein prM. Interacts with non-structural protein 1. As to quaternary structure, homodimer; Homohexamer when secreted. Interacts with envelope protein E. N-glycosylated. Post-translationally, N-glycosylated. The excreted form is glycosylated and this is required for efficient secretion of the protein from infected cells. In terms of processing, specific enzymatic cleavages in vivo yield mature proteins. Cleavages in the lumen of endoplasmic reticulum are performed by host signal peptidase, wereas cleavages in the cytoplasmic side are performed by serine protease NS3. Signal cleavage at the 2K-4B site requires a prior NS3 protease-mediated cleavage at the 4A-2K site.

It localises to the virion membrane. The protein localises to the host endoplasmic reticulum membrane. Its subcellular location is the secreted. In terms of biological role, may play a role in virus budding. Exerts cytotoxic effects by activating a mitochondrial apoptotic pathway through M ectodomain. May display a viroporin activity. Binds to host cell surface receptor and mediates fusion between viral and cellular membranes. Envelope protein is synthesized in the endoplasmic reticulum in the form of heterodimer with protein prM. They play a role in virion budding in the ER, and the newly formed immature particle is covered with 60 spikes composed of heterodimer between precursor prM and envelope protein E. The virion is transported to the Golgi apparatus where the low pH causes dissociation of PrM-E heterodimers and formation of E homodimers. prM-E cleavage is inefficient, and many virions are only partially matured. These uncleaved prM would play a role in immune evasion. Its function is as follows. Involved in immune evasion, pathogenesis and viral replication. Once cleaved off the polyprotein, is targeted to three destinations: the viral replication cycle, the plasma membrane and the extracellular compartment. Essential for viral replication. Required for formation of the replication complex and recruitment of other non-structural proteins to the ER-derived membrane structures. Excreted as a hexameric lipoparticle that plays a role against host immune response. Antagonizing the complement function. Binds to the host macrophages and dendritic cells. Inhibits signal transduction originating from Toll-like receptor 3 (TLR3). Functionally, disrupts the host endothelial glycocalyx layer of host pulmonary microvascular endothelial cells, inducing degradation of sialic acid and shedding of heparan sulfate proteoglycans. NS1 induces expression of sialidases, heparanase, and activates cathepsin L, which activates heparanase via enzymatic cleavage. These effects are probably linked to the endothelial hyperpermeability observed in severe dengue disease. In Dengue virus type 2 (strain Thailand/TH-36/1958) (DENV-2), this protein is Genome polyprotein.